A 339-amino-acid polypeptide reads, in one-letter code: Anthranilate phosphoribosyltransferase (339 aa).

Residues Gly82, 85 to 86 (GD), Thr90, 92 to 95 (NIST), and 110 to 118 (KHGNRAVSS) each bind 5-phospho-alpha-D-ribose 1-diphosphate. Anthranilate is bound at residue Gly82. Ser94 serves as a coordination point for Mg(2+). The anthranilate site is built by Asn113 and Arg168. Residues Asp227 and Glu228 each coordinate Mg(2+).

Belongs to the anthranilate phosphoribosyltransferase family. In terms of assembly, homodimer. It depends on Mg(2+) as a cofactor.

It carries out the reaction N-(5-phospho-beta-D-ribosyl)anthranilate + diphosphate = 5-phospho-alpha-D-ribose 1-diphosphate + anthranilate. Its pathway is amino-acid biosynthesis; L-tryptophan biosynthesis; L-tryptophan from chorismate: step 2/5. Catalyzes the transfer of the phosphoribosyl group of 5-phosphorylribose-1-pyrophosphate (PRPP) to anthranilate to yield N-(5'-phosphoribosyl)-anthranilate (PRA). This Clostridium beijerinckii (strain ATCC 51743 / NCIMB 8052) (Clostridium acetobutylicum) protein is Anthranilate phosphoribosyltransferase.